Consider the following 357-residue polypeptide: Type II methyltransferase M1.HgaI (357 aa).

The SAM-dependent MTase C5-type domain occupies 5–357 (IMGLSLFSSA…NITREIFNEN (353 aa)). Residue Cys-83 is part of the active site.

It belongs to the class I-like SAM-binding methyltransferase superfamily. C5-methyltransferase family.

The enzyme catalyses a 2'-deoxycytidine in DNA + S-adenosyl-L-methionine = a 5-methyl-2'-deoxycytidine in DNA + S-adenosyl-L-homocysteine + H(+). Functionally, a methylase that recognizes DNA with the sequence 5'-GCGTC-3', methylates C-2, and protects the DNA from cleavage by the HgaI endonuclease. This is Type II methyltransferase M1.HgaI (hgaIAM) from Avibacterium volantium (Pasteurella volantium).